A 370-amino-acid chain; its full sequence is Death-associated protein kinase 2 (370 aa).

Residues 23 to 285 form the Protein kinase domain; the sequence is YDIGEELGSG…IQEALRHPWI (263 aa). ATP contacts are provided by residues 29–37 and Lys-52; that span reads LGSGQFAIV. The active-site Proton acceptor is the Asp-149. Residues 287–354 form a calmodulin-binding region; sequence PVDTQQAMVR…RNCESDTEEN (68 aa). The autoinhibitory domain stretch occupies residues 292–301; the sequence is QAMVRRESVV. Ser-299 is subject to Phosphoserine. Phosphoserine; by autocatalysis is present on Ser-318. Ser-349 carries the post-translational modification Phosphoserine. Phosphothreonine is present on Thr-369.

It belongs to the protein kinase superfamily. CAMK Ser/Thr protein kinase family. DAP kinase subfamily. Homodimer in its autoinhibited state. Active as monomer. Interacts with 14-3-3 proteins YWHAB, YWHAE, YWHAG, YWHAH, YWHAQ, YWHAZ and SFN; the interaction requires DAPK2 phosphorylation at Thr-369 and suppresses DAPK2 kinase activity and DAPK2-induced apoptosis. Mg(2+) serves as cofactor. Autophosphorylation at Ser-318 inhibits its catalytic activity. Dephosphorylated at Ser-318 in response to activated Fas and TNF-alpha receptors. Expressed in peritubular interstitial cells of the renal cortex. Isoform 1 is found in the adult brain while isoform 2 is expressed in brains of embryos and young mice (at protein level).

It localises to the cytoplasm. The protein resides in the cytoplasmic vesicle. Its subcellular location is the autophagosome lumen. The enzyme catalyses L-seryl-[protein] + ATP = O-phospho-L-seryl-[protein] + ADP + H(+). The catalysed reaction is L-threonyl-[protein] + ATP = O-phospho-L-threonyl-[protein] + ADP + H(+). Activated by Ca(2+)/calmodulin. Regulated by a double locking mechanism, involving autophosphorylation at Ser-318, calmodulin binding, and dimerization. In the inactive state, Ser-318 is phosphorylated, and the kinase is dimeric. Activation involves: dephosphorylation at Ser-318, release-of-autoinhibition mechanism where calmodulin binding induces a conformational change that relieves the steric block of the active site by the autoinhibitory domain, and generation of the monomeric active form of the kinase. Its function is as follows. Calcium/calmodulin-dependent serine/threonine kinase involved in multiple cellular signaling pathways that trigger cell survival, apoptosis, and autophagy. Capable of regulating both type I apoptotic and type II autophagic cell death signals. The former involves caspase activation, chromatin and mitochondrial condensation while the latter involves caspase-independent cell death in conjunction with accumulation of mature autophagic vesicles, plasma membrane blebs, and nuclear condensation without DNA degradation. Mediator of anoikis and a suppressor of beta-catenin-dependent anchorage-independent growth of malignant epithelial cells. May play a role in granulocytic maturation. Regulates granulocytes motility by controlling cell spreading and polarization. This chain is Death-associated protein kinase 2 (Dapk2), found in Mus musculus (Mouse).